Consider the following 122-residue polypeptide: Large ribosomal subunit protein bL12 (122 aa).

Belongs to the bacterial ribosomal protein bL12 family. Homodimer. Part of the ribosomal stalk of the 50S ribosomal subunit. Forms a multimeric L10(L12)X complex, where L10 forms an elongated spine to which 2 to 4 L12 dimers bind in a sequential fashion. Binds GTP-bound translation factors.

Functionally, forms part of the ribosomal stalk which helps the ribosome interact with GTP-bound translation factors. Is thus essential for accurate translation. The chain is Large ribosomal subunit protein bL12 from Shewanella woodyi (strain ATCC 51908 / MS32).